Here is a 447-residue protein sequence, read N- to C-terminus: Sulfoquinovose isomerase (447 aa).

Belongs to the SqvD family.

The catalysed reaction is 6-sulfo-beta-D-quinovose = 6-deoxy-6-sulfo-D-fructose. Functionally, part of the sulfo-TK pathway, a D-sulfoquinovose degradation pathway that produces 2-hydroxyethane-1-sulfonate (isethionate). Catalyzes the isomerization of sulfoquinovose (SQ) to 6-deoxy-6-sulfo-D-fructose (SF). This chain is Sulfoquinovose isomerase, found in Clostridium sp. (strain MSTE9).